The following is a 99-amino-acid chain: uncharacterized protein (99 aa).

A signal peptide spans 1 to 17 (MMMNAFFPAMALIVLVG). Cys18 carries the N-palmitoyl cysteine lipid modification. Cys18 carries the S-diacylglycerol cysteine lipid modification.

The protein resides in the cell membrane. This is an uncharacterized protein from Escherichia coli (strain UTI89 / UPEC).